A 681-amino-acid polypeptide reads, in one-letter code: DNA-directed RNA polymerase subunit beta' (681 aa).

Residues C69, C71, C87, and C90 each contribute to the Zn(2+) site. 3 residues coordinate Mg(2+): D489, D491, and D493.

Belongs to the RNA polymerase beta' chain family. RpoC1 subfamily. In plastids the minimal PEP RNA polymerase catalytic core is composed of four subunits: alpha, beta, beta', and beta''. When a (nuclear-encoded) sigma factor is associated with the core the holoenzyme is formed, which can initiate transcription. It depends on Mg(2+) as a cofactor. Requires Zn(2+) as cofactor.

Its subcellular location is the plastid. It localises to the chloroplast. The enzyme catalyses RNA(n) + a ribonucleoside 5'-triphosphate = RNA(n+1) + diphosphate. Its function is as follows. DNA-dependent RNA polymerase catalyzes the transcription of DNA into RNA using the four ribonucleoside triphosphates as substrates. This is DNA-directed RNA polymerase subunit beta' from Cycas taitungensis (Prince sago).